The chain runs to 114 residues: Non-specific lipid-transfer protein 2 (114 aa).

A signal peptide spans 1-23 (MEMVNKIACFVLLCMVVVAPHAE). 4 cysteine pairs are disulfide-bonded: Cys27–Cys73, Cys37–Cys50, Cys51–Cys96, and Cys71–Cys110.

Belongs to the plant LTP family.

Functionally, plant non-specific lipid-transfer proteins transfer phospholipids as well as galactolipids across membranes. May play a role in wax or cutin deposition in the cell walls of expanding epidermal cells and certain secretory tissues. In Solanum chilense (Tomato), this protein is Non-specific lipid-transfer protein 2.